We begin with the raw amino-acid sequence, 371 residues long: Probable acetylxylan esterase A (371 aa).

An N-terminal signal peptide occupies residues methionine 1 to alanine 19. The tract at residues glycine 32 to phenylalanine 304 is catalytic. Residue serine 149 is the Charge relay system of the active site. An N-linked (GlcNAc...) asparagine glycan is attached at asparagine 191. The tract at residues threonine 305–glycine 335 is disordered. Positions threonine 305 to valine 336 are ser/Thr-rich linker. Low complexity predominate over residues glycine 307 to glycine 335. The CBM1 domain maps to glycine 335–leucine 371.

This sequence belongs to the carbohydrate esterase 1 (CE1) family. AxeA subfamily. Monomer.

Its subcellular location is the secreted. It catalyses the reaction Deacetylation of xylans and xylo-oligosaccharides.. It functions in the pathway glycan degradation; xylan degradation. Its function is as follows. Acetylxylan esterase involved in the hydrolysis of xylan, a major structural heterogeneous polysaccharide found in plant biomass representing the second most abundant polysaccharide in the biosphere, after cellulose. Degrades acetylated xylans by cleaving acetyl side groups from the hetero-xylan backbone. This is Probable acetylxylan esterase A (axeA) from Aspergillus fumigatus (strain ATCC MYA-4609 / CBS 101355 / FGSC A1100 / Af293) (Neosartorya fumigata).